We begin with the raw amino-acid sequence, 140 residues long: Methylglyoxal synthase (140 aa).

The region spanning 1–140 is the MGS-like domain; the sequence is MRSKPRIALI…DQAAADDAAP (140 aa). Substrate contacts are provided by residues His-12, Lys-16, 38 to 41, and 58 to 59; these read TGTT and SG. Catalysis depends on Asp-64, which acts as the Proton donor/acceptor. His-91 is a binding site for substrate.

It belongs to the methylglyoxal synthase family.

The enzyme catalyses dihydroxyacetone phosphate = methylglyoxal + phosphate. Its function is as follows. Catalyzes the formation of methylglyoxal from dihydroxyacetone phosphate. The protein is Methylglyoxal synthase of Cupriavidus metallidurans (strain ATCC 43123 / DSM 2839 / NBRC 102507 / CH34) (Ralstonia metallidurans).